Consider the following 168-residue polypeptide: GTP-dependent dephospho-CoA kinase (168 aa).

GTP is bound by residues Asp-49, Ile-50, Val-51, Asp-68, Lys-70, and Glu-120.

Belongs to the GTP-dependent DPCK family.

The catalysed reaction is 3'-dephospho-CoA + GTP = GDP + CoA + H(+). The protein operates within cofactor biosynthesis; coenzyme A biosynthesis. In terms of biological role, catalyzes the GTP-dependent phosphorylation of the 3'-hydroxyl group of dephosphocoenzyme A to form coenzyme A (CoA). The protein is GTP-dependent dephospho-CoA kinase of Pyrobaculum islandicum (strain DSM 4184 / JCM 9189 / GEO3).